We begin with the raw amino-acid sequence, 340 residues long: Outer membrane protein U (340 aa).

Positions 1–21 (MKKTLIALSVSAAAVATGVNA) are cleaved as a signal peptide.

It belongs to the Gram-negative porin family. As to quaternary structure, homotrimer.

Its subcellular location is the cell outer membrane. Forms pores that allow passive diffusion of small molecules across the outer membrane. This is Outer membrane protein U (ompU) from Vibrio vulnificus (strain CMCP6).